The primary structure comprises 419 residues: Histidine--tRNA ligase (419 aa).

This sequence belongs to the class-II aminoacyl-tRNA synthetase family. In terms of assembly, homodimer.

The protein resides in the cytoplasm. The enzyme catalyses tRNA(His) + L-histidine + ATP = L-histidyl-tRNA(His) + AMP + diphosphate + H(+). The protein is Histidine--tRNA ligase of Desulforamulus reducens (strain ATCC BAA-1160 / DSM 100696 / MI-1) (Desulfotomaculum reducens).